Reading from the N-terminus, the 177-residue chain is Peptidyl-tRNA hydrolase (177 aa).

Residue Tyr18 coordinates tRNA. The active-site Proton acceptor is His23. Residues Phe65, Asn67, and Asn113 each coordinate tRNA.

Belongs to the PTH family. As to quaternary structure, monomer.

The protein localises to the cytoplasm. The enzyme catalyses an N-acyl-L-alpha-aminoacyl-tRNA + H2O = an N-acyl-L-amino acid + a tRNA + H(+). Its function is as follows. Hydrolyzes ribosome-free peptidyl-tRNAs (with 1 or more amino acids incorporated), which drop off the ribosome during protein synthesis, or as a result of ribosome stalling. In terms of biological role, catalyzes the release of premature peptidyl moieties from peptidyl-tRNA molecules trapped in stalled 50S ribosomal subunits, and thus maintains levels of free tRNAs and 50S ribosomes. This is Peptidyl-tRNA hydrolase from Corynebacterium efficiens (strain DSM 44549 / YS-314 / AJ 12310 / JCM 11189 / NBRC 100395).